The primary structure comprises 508 residues: H/ACA ribonucleoprotein complex subunit 4 (508 aa).

The segment at methionine 1 to glutamine 29 is disordered. Aspartate 123 (nucleophile) is an active-site residue. Positions histidine 294–methionine 369 constitute a PUA domain. Residues alanine 423–glutamate 508 form a disordered region. Serine 442 is subject to Phosphoserine. A compositionally biased stretch (low complexity) spans serine 442 to glutamate 457. A Phosphothreonine modification is found at threonine 443. 2 positions are modified to phosphoserine: serine 444 and serine 445. The residue at position 449 (threonine 449) is a Phosphothreonine. A Phosphoserine modification is found at serine 455. Threonine 458 carries the phosphothreonine modification. The span at glutamate 475–glutamate 485 shows a compositional bias: acidic residues. Positions lysine 499–glutamate 508 are enriched in basic and acidic residues.

It belongs to the pseudouridine synthase TruB family. As to quaternary structure, component of the box H/ACA small nucleolar ribonucleoprotein (H/ACA snoRNP) complex consisting of Nop60B, Gar1, NPH2 and Nop10, and associated with H/ACA-type snoRNAs. As to expression, expressed at higher levels in females than in males. In terms of tissue distribution, expressed almost exclusively in females with high levels of expression in the ovary.

Its subcellular location is the nucleus. It localises to the nucleolus. The enzyme catalyses a uridine in RNA = a pseudouridine in RNA. Functionally, catalytic subunit of the box H/ACA small nucleolar ribonucleoprotein (H/ACA snoRNP) complex, which catalyzes pseudouridylation of rRNA. This involves the isomerization of uridine such that the ribose is subsequently attached to C5, instead of the normal N1. Pseudouridine ('psi') residues may serve to stabilize the conformation of rRNAs. Required for ribosome biogenesis; plays a central role in ribosomal RNA processing. H/ACA snoRNP complex-dependent ribosome biogenesis is important in female germline cell differentiation during oogenesis. Essential for viability and female fertility. Required for maintenance of the germline stem cell lineage during spermatogenesis. This is H/ACA ribonucleoprotein complex subunit 4 from Drosophila melanogaster (Fruit fly).